Here is a 715-residue protein sequence, read N- to C-terminus: Fatty acid oxidation complex subunit alpha (715 aa).

The enoyl-CoA hydratase/isomerase stretch occupies residues 1-190; the sequence is MIYEGKAITV…KVGAVDAVVA (190 aa). D297 lines the substrate pocket. Positions 312-715 are 3-hydroxyacyl-CoA dehydrogenase; the sequence is RDVKQAAVLG…MAKNGQSFFG (404 aa). Residues M325, D344, 401–403, K408, and S430 each bind NAD(+); that span reads VVE. H451 functions as the For 3-hydroxyacyl-CoA dehydrogenase activity in the catalytic mechanism. N454 provides a ligand contact to NAD(+). Positions 501 and 660 each coordinate substrate.

In the N-terminal section; belongs to the enoyl-CoA hydratase/isomerase family. It in the C-terminal section; belongs to the 3-hydroxyacyl-CoA dehydrogenase family. Heterotetramer of two alpha chains (FadB) and two beta chains (FadA).

The enzyme catalyses a (3S)-3-hydroxyacyl-CoA + NAD(+) = a 3-oxoacyl-CoA + NADH + H(+). The catalysed reaction is a (3S)-3-hydroxyacyl-CoA = a (2E)-enoyl-CoA + H2O. It catalyses the reaction a 4-saturated-(3S)-3-hydroxyacyl-CoA = a (3E)-enoyl-CoA + H2O. It carries out the reaction (3S)-3-hydroxybutanoyl-CoA = (3R)-3-hydroxybutanoyl-CoA. The enzyme catalyses a (3Z)-enoyl-CoA = a 4-saturated (2E)-enoyl-CoA. The catalysed reaction is a (3E)-enoyl-CoA = a 4-saturated (2E)-enoyl-CoA. Its pathway is lipid metabolism; fatty acid beta-oxidation. In terms of biological role, involved in the aerobic and anaerobic degradation of long-chain fatty acids via beta-oxidation cycle. Catalyzes the formation of 3-oxoacyl-CoA from enoyl-CoA via L-3-hydroxyacyl-CoA. It can also use D-3-hydroxyacyl-CoA and cis-3-enoyl-CoA as substrate. In Pseudomonas fluorescens (strain SBW25), this protein is Fatty acid oxidation complex subunit alpha.